Consider the following 307-residue polypeptide: MSHRPILKNFPQVDHHQASGKLGDLYNDIHDTLRVPWVAFGIRVMSQFEHFVPAAWEALKPQISTRYAEEGADKVREAAIIPGSAPANPTPALLANGWSEEEIAKLKATLDGLNYGNPKYLILISAWNEAWHGRDAGGGAGKRLDSVQSERLPYGLPQGVEKFHLIDPEAADDQVQCLLRDIRDAFLHHGPASDYRVLAAWPDYLEIAFRDTLKPVALTTEFELTTSRIRKIAREHVRGFDGAGGVAWRDMADRMTPEEIAGLTGVLFMYNRFIADITVAIIRLKQAFGSAEDATENKFRVWPTEKG.

Belongs to the HAD-like hydrolase superfamily. S-2-haloalkanoic acid dehalogenase family. As to quaternary structure, homodimer.

The enzyme catalyses an (S)-2-haloacid + H2O = a (2R)-2-hydroxycarboxylate + a halide anion + H(+). It carries out the reaction an (R)-2-haloacid + H2O = a (2S)-2-hydroxycarboxylate + a halide anion + H(+). Dehalogenates both (S)- and (R)-2-haloalkanoic acids to the corresponding (R)- and (S)-hydroxyalkanoic acids, respectively, with inversion of configuration at C-2. Acts on 2-haloalkanoic acids whose carbon chain lengths are five or less. This Pseudomonas sp. (strain 113) protein is 2-haloacid dehalogenase, configuration-inverting.